Consider the following 101-residue polypeptide: Thyrotropin subunit beta (101 aa).

4 cysteine pairs are disulfide-bonded: Cys-2–Cys-88, Cys-10–Cys-66, Cys-14–Cys-68, and Cys-71–Cys-78. N-linked (GlcNAc...) asparagine glycosylation occurs at Asn-6.

It belongs to the glycoprotein hormones subunit beta family. In terms of assembly, heterodimer of a common alpha chain and a unique beta chain which confers biological specificity to thyrotropin, lutropin, follitropin and gonadotropin.

The protein resides in the secreted. Functionally, indispensable for the control of thyroid structure and metabolism. This chain is Thyrotropin subunit beta (TSHB), found in Phodopus sungorus (Striped hairy-footed hamster).